The sequence spans 425 residues: Alpha-(1,3)-fucosyltransferase C (425 aa).

Residues 1 to 37 lie on the Cytoplasmic side of the membrane; that stretch reads MYLGRVHCSFEVPGLLSGRVGHMSMAVRSVRLACGPR. The chain crosses the membrane as a helical; Signal-anchor for type II membrane protein span at residues 38–58; sequence GALLLLLLVLLGVLVVLHKVT. Over 59 to 425 the chain is Lumenal; sequence QSPLLNQNKI…SCRLQSRIRL (367 aa). N-linked (GlcNAc...) asparagine glycans are attached at residues N187 and N230.

It belongs to the glycosyltransferase 10 family.

Its subcellular location is the golgi apparatus. The protein localises to the golgi stack membrane. It participates in protein modification; protein glycosylation. The chain is Alpha-(1,3)-fucosyltransferase C (FucTC) from Drosophila melanogaster (Fruit fly).